A 309-amino-acid polypeptide reads, in one-letter code: Elongation factor Ts, mitochondrial (309 aa).

Belongs to the EF-Ts family.

Its subcellular location is the mitochondrion. In terms of biological role, associates with the EF-Tu.GDP complex and induces the exchange of GDP to GTP. It remains bound to the aminoacyl-tRNA.EF-Tu.GTP complex up to the GTP hydrolysis stage on the ribosome. The protein is Elongation factor Ts, mitochondrial (tsfm) of Salmo salar (Atlantic salmon).